We begin with the raw amino-acid sequence, 197 residues long: NADH-quinone oxidoreductase subunit C (197 aa).

The protein belongs to the complex I 30 kDa subunit family. NDH-1 is composed of 14 different subunits. Subunits NuoB, C, D, E, F, and G constitute the peripheral sector of the complex.

It localises to the cell inner membrane. It carries out the reaction a quinone + NADH + 5 H(+)(in) = a quinol + NAD(+) + 4 H(+)(out). NDH-1 shuttles electrons from NADH, via FMN and iron-sulfur (Fe-S) centers, to quinones in the respiratory chain. The immediate electron acceptor for the enzyme in this species is believed to be ubiquinone. Couples the redox reaction to proton translocation (for every two electrons transferred, four hydrogen ions are translocated across the cytoplasmic membrane), and thus conserves the redox energy in a proton gradient. The polypeptide is NADH-quinone oxidoreductase subunit C (Neisseria gonorrhoeae (strain ATCC 700825 / FA 1090)).